A 38-amino-acid chain; its full sequence is Photosystem II reaction center protein L (38 aa).

A helical membrane pass occupies residues 17–37; the sequence is SLYWGLLLIFVLAILFSNYIF.

This sequence belongs to the PsbL family. PSII is composed of 1 copy each of membrane proteins PsbA, PsbB, PsbC, PsbD, PsbE, PsbF, PsbH, PsbI, PsbJ, PsbK, PsbL, PsbM, PsbT, PsbX, PsbY, PsbZ, Psb30/Ycf12, at least 3 peripheral proteins of the oxygen-evolving complex and a large number of cofactors. It forms dimeric complexes.

The protein localises to the plastid. It is found in the chloroplast thylakoid membrane. Its function is as follows. One of the components of the core complex of photosystem II (PSII). PSII is a light-driven water:plastoquinone oxidoreductase that uses light energy to abstract electrons from H(2)O, generating O(2) and a proton gradient subsequently used for ATP formation. It consists of a core antenna complex that captures photons, and an electron transfer chain that converts photonic excitation into a charge separation. This subunit is found at the monomer-monomer interface and is required for correct PSII assembly and/or dimerization. This Chlorokybus atmophyticus (Soil alga) protein is Photosystem II reaction center protein L.